The following is a 160-amino-acid chain: Glucagon-1 (160 aa).

The N-terminal stretch at 1–22 (MSDPGFLAAPVLLLLLVSLASA) is a signal peptide. Propeptides lie at residues 23-40 (SLEQ…RPLS), 74-79 (GGSELQ), and 116-127 (DGGDHLAENSED). The interval 112 to 132 (KSRRDGGDHLAENSEDKRHAE) is disordered.

It belongs to the glucagon family.

It is found in the secreted. Its function is as follows. Promotes hydrolysis of glycogen and lipids, and raises the blood sugar level. The protein is Glucagon-1 (gcg1) of Petromyzon marinus (Sea lamprey).